Consider the following 390-residue polypeptide: S-adenosylmethionine synthase 3 (390 aa).

Mg(2+) is bound at residue glutamate 9. Histidine 15 contributes to the ATP binding site. Glutamate 43 contributes to the K(+) binding site. Glutamate 56 and glutamine 99 together coordinate L-methionine. Residues 167–169, 235–238, aspartate 246, 252–253, alanine 269, lysine 273, and lysine 277 contribute to the ATP site; these read DGK, SGRF, and RK. Aspartate 246 serves as a coordination point for L-methionine. Lysine 277 provides a ligand contact to L-methionine.

Belongs to the AdoMet synthase family. As to quaternary structure, homotetramer. The cofactor is Mn(2+). Requires Mg(2+) as cofactor. It depends on Co(2+) as a cofactor. K(+) is required as a cofactor. Mostly expressed in stems and leaves.

It localises to the cytoplasm. It catalyses the reaction L-methionine + ATP + H2O = S-adenosyl-L-methionine + phosphate + diphosphate. Its pathway is amino-acid biosynthesis; S-adenosyl-L-methionine biosynthesis; S-adenosyl-L-methionine from L-methionine: step 1/1. In terms of biological role, catalyzes the formation of S-adenosylmethionine from methionine and ATP. The reaction comprises two steps that are both catalyzed by the same enzyme: formation of S-adenosylmethionine (AdoMet) and triphosphate, and subsequent hydrolysis of the triphosphate. The sequence is that of S-adenosylmethionine synthase 3 (SAM3) from Solanum lycopersicum (Tomato).